The chain runs to 411 residues: Alpha-galactosidase (411 aa).

The first 24 residues, 1–24 (MATHYSIIGGMIIVVLLMIIGSEG), serve as a signal peptide directing secretion. A propeptide spanning residues 25-47 (GRLLEKKNRTSAEAEHYNVRRYL) is cleaved from the precursor. The N-linked (GlcNAc...) asparagine glycan is linked to N32. A disulfide bridge links C68 with C100. A glycan (N-linked (GlcNAc...) asparagine) is linked at N145. An intrachain disulfide couples C148 to C179. D177 serves as the catalytic Nucleophile. 210-214 (EWGWE) provides a ligand contact to substrate. The Proton donor role is filled by D232. N352 carries N-linked (GlcNAc...) asparagine glycosylation.

The protein belongs to the glycosyl hydrolase 27 family.

It carries out the reaction Hydrolysis of terminal, non-reducing alpha-D-galactose residues in alpha-D-galactosides, including galactose oligosaccharides, galactomannans and galactolipids.. Functionally, involved in the hydrolysis of the galactomannan, it splits alpha-linked galactose moieties. It is particularly suitable for the hydrolysis of guar gum to a gum with improved gelling properties. Preferentially cleaves alpha-1,6 glycoside linkages. The chain is Alpha-galactosidase from Cyamopsis tetragonoloba (Guar).